The chain runs to 259 residues: Imidazole glycerol phosphate synthase subunit HisF (259 aa).

Catalysis depends on residues Asp-11 and Asp-130.

The protein belongs to the HisA/HisF family. In terms of assembly, heterodimer of HisH and HisF.

The protein resides in the cytoplasm. It carries out the reaction 5-[(5-phospho-1-deoxy-D-ribulos-1-ylimino)methylamino]-1-(5-phospho-beta-D-ribosyl)imidazole-4-carboxamide + L-glutamine = D-erythro-1-(imidazol-4-yl)glycerol 3-phosphate + 5-amino-1-(5-phospho-beta-D-ribosyl)imidazole-4-carboxamide + L-glutamate + H(+). It participates in amino-acid biosynthesis; L-histidine biosynthesis; L-histidine from 5-phospho-alpha-D-ribose 1-diphosphate: step 5/9. Its function is as follows. IGPS catalyzes the conversion of PRFAR and glutamine to IGP, AICAR and glutamate. The HisF subunit catalyzes the cyclization activity that produces IGP and AICAR from PRFAR using the ammonia provided by the HisH subunit. The sequence is that of Imidazole glycerol phosphate synthase subunit HisF from Polaromonas sp. (strain JS666 / ATCC BAA-500).